Consider the following 518-residue polypeptide: Arrestin-related trafficking adapter 10 (518 aa).

Lys118 is covalently cross-linked (Glycyl lysine isopeptide (Lys-Gly) (interchain with G-Cter in ubiquitin)).

This sequence belongs to the ART10 family. In terms of assembly, interacts with RSP5. Ubiquitinated by RSP5.

The protein localises to the cytoplasm. Functionally, may regulate endocytosis by recruiting RSP5 ubiquitin ligase activity to specific plasma membrane proteins in response to extracellular stimuli. This is Arrestin-related trafficking adapter 10 (ART10) from Saccharomyces cerevisiae (strain ATCC 204508 / S288c) (Baker's yeast).